The following is a 109-amino-acid chain: uncharacterized protein (109 aa).

Residues 63–85 (LFVKTFFACTYIIMLAFQVYIFL) form a helical membrane-spanning segment.

It localises to the membrane. This is an uncharacterized protein from Saccharomyces cerevisiae (strain ATCC 204508 / S288c) (Baker's yeast).